A 389-amino-acid polypeptide reads, in one-letter code: Alcohol dehydrogenase-like 5 (389 aa).

The Zn(2+) site is built by cysteine 54, threonine 56, histidine 77, cysteine 107, cysteine 110, cysteine 113, cysteine 121, and cysteine 186. Residues threonine 56 and histidine 77 each contribute to the an alcohol site. Residue threonine 56 coordinates NAD(+). NAD(+) is bound by residues 211 to 216, aspartate 235, lysine 240, 305 to 307, phenylalanine 332, and arginine 382; these read GLGAVG and LGI.

It belongs to the zinc-containing alcohol dehydrogenase family. Class-III subfamily. In terms of assembly, homodimer. Zn(2+) serves as cofactor.

It is found in the cytoplasm. The catalysed reaction is a primary alcohol + NAD(+) = an aldehyde + NADH + H(+). It carries out the reaction a secondary alcohol + NAD(+) = a ketone + NADH + H(+). In Arabidopsis thaliana (Mouse-ear cress), this protein is Alcohol dehydrogenase-like 5.